We begin with the raw amino-acid sequence, 365 residues long: DNA replication and repair protein RecF (365 aa).

30–37 (GRNAQGKT) contributes to the ATP binding site.

This sequence belongs to the RecF family.

Its subcellular location is the cytoplasm. In terms of biological role, the RecF protein is involved in DNA metabolism; it is required for DNA replication and normal SOS inducibility. RecF binds preferentially to single-stranded, linear DNA. It also seems to bind ATP. This chain is DNA replication and repair protein RecF, found in Streptococcus pneumoniae serotype 2 (strain D39 / NCTC 7466).